The following is a 313-amino-acid chain: Protein FixB (313 aa).

255-283 (LYLAVGISGQIQHMVGANASQTIFAINKD) serves as a coordination point for FAD.

It belongs to the ETF alpha-subunit/FixB family. Heterodimer of FixA and FixB.

It participates in amine and polyamine metabolism; carnitine metabolism. Functionally, required for anaerobic carnitine reduction. May bring reductant to CaiA. This Escherichia coli O1:K1 / APEC protein is Protein FixB.